Reading from the N-terminus, the 86-residue chain is Small ribosomal subunit protein bS20 (86 aa).

The segment at 1–25 (MANSASSRKRARQAVKRNKHNSQIR) is disordered. Residues 7-25 (SRKRARQAVKRNKHNSQIR) show a composition bias toward basic residues.

The protein belongs to the bacterial ribosomal protein bS20 family.

In terms of biological role, binds directly to 16S ribosomal RNA. The chain is Small ribosomal subunit protein bS20 from Vesicomyosocius okutanii subsp. Calyptogena okutanii (strain HA).